The following is a 90-amino-acid chain: Putative membrane protein insertion efficiency factor (90 aa).

The protein belongs to the UPF0161 family.

The protein resides in the cell membrane. Could be involved in insertion of integral membrane proteins into the membrane. In Oceanobacillus iheyensis (strain DSM 14371 / CIP 107618 / JCM 11309 / KCTC 3954 / HTE831), this protein is Putative membrane protein insertion efficiency factor.